The sequence spans 526 residues: Probable carboxypeptidase 2 (526 aa).

The first 21 residues, 1 to 21 (MVAYRLLALISLGLGSHCASA), serve as a signal peptide directing secretion. Residue asparagine 46 is glycosylated (N-linked (GlcNAc...) asparagine). The disordered stretch occupies residues 53–76 (PAFTSPGTVPRGFSDGTSGPTRDE). Residues 71-351 (GPTRDETMEG…VMAKSILQTA (281 aa)) enclose the Peptidase M14 domain. The N-linked (GlcNAc...) asparagine glycan is linked to asparagine 116. 3 residues coordinate Zn(2+): histidine 136, glutamate 139, and histidine 224. Glutamate 322 (proton donor/acceptor) is an active-site residue. Asparagine 393 and asparagine 459 each carry an N-linked (GlcNAc...) asparagine glycan.

It belongs to the peptidase M14 family. Requires Zn(2+) as cofactor.

Its subcellular location is the secreted. In terms of biological role, extracellular metalloprotease that contributes to pathogenicity. This Arthroderma benhamiae (strain ATCC MYA-4681 / CBS 112371) (Trichophyton mentagrophytes) protein is Probable carboxypeptidase 2 (MCPB).